The sequence spans 70 residues: Large ribosomal subunit protein bL31 (70 aa).

4 residues coordinate Zn(2+): C16, C18, C37, and C40.

Belongs to the bacterial ribosomal protein bL31 family. Type A subfamily. In terms of assembly, part of the 50S ribosomal subunit. Zn(2+) is required as a cofactor.

Its function is as follows. Binds the 23S rRNA. The polypeptide is Large ribosomal subunit protein bL31 (Cronobacter sakazakii (strain ATCC BAA-894) (Enterobacter sakazakii)).